A 342-amino-acid polypeptide reads, in one-letter code: 4-hydroxythreonine-4-phosphate dehydrogenase (342 aa).

Positions 140 and 141 each coordinate substrate. Residues His-175, His-220, and His-275 each contribute to the a divalent metal cation site. Substrate-binding residues include Lys-283, Asn-292, and Arg-301.

Belongs to the PdxA family. As to quaternary structure, homodimer. Zn(2+) serves as cofactor. Requires Mg(2+) as cofactor. Co(2+) is required as a cofactor.

The protein resides in the cytoplasm. The catalysed reaction is 4-(phosphooxy)-L-threonine + NAD(+) = 3-amino-2-oxopropyl phosphate + CO2 + NADH. The protein operates within cofactor biosynthesis; pyridoxine 5'-phosphate biosynthesis; pyridoxine 5'-phosphate from D-erythrose 4-phosphate: step 4/5. Its function is as follows. Catalyzes the NAD(P)-dependent oxidation of 4-(phosphooxy)-L-threonine (HTP) into 2-amino-3-oxo-4-(phosphooxy)butyric acid which spontaneously decarboxylates to form 3-amino-2-oxopropyl phosphate (AHAP). The chain is 4-hydroxythreonine-4-phosphate dehydrogenase from Rhizobium meliloti (strain 1021) (Ensifer meliloti).